The chain runs to 422 residues: ORC1-type DNA replication protein 13 (422 aa).

ATP-binding positions include 80 to 84, tyrosine 231, and arginine 243; that span reads TGKTL.

This sequence belongs to the CDC6/cdc18 family.

Its function is as follows. Involved in regulation of DNA replication. The chain is ORC1-type DNA replication protein 13 (cdc6m) from Haloarcula marismortui (strain ATCC 43049 / DSM 3752 / JCM 8966 / VKM B-1809) (Halobacterium marismortui).